The primary structure comprises 289 residues: Extracellular ribonuclease (289 aa).

The signal sequence occupies residues M1–A24. A propeptide spanning residues S25–Q51 is cleaved from the precursor. The segment at F177 to W197 is disordered.

It is found in the secreted. Functionally, mg(2+)-activated ribonuclease which hydrolyzes RNA apparently nonspecifically into oligonucleotides with 5'-terminal phosphate. This chain is Extracellular ribonuclease (bsn), found in Bacillus amyloliquefaciens (Bacillus velezensis).